Here is a 1942-residue protein sequence, read N- to C-terminus: Myosin-1 (1942 aa).

The Myosin N-terminal SH3-like domain occupies 33–82 (DAKSSVFVVDAKESFVKATVQSREGGKVTAKTEGGTTVTVKDDQVYPMNP). Serine 36 is modified (phosphoserine). Phosphothreonine occurs at positions 64 and 69. Residues 86–785 (DKIEDMAMMT…LLGLLEEMRD (700 aa)) enclose the Myosin motor domain. Lysine 130 bears the N6,N6,N6-trimethyllysine mark. Residue 179-186 (GESGAGKT) participates in ATP binding. Residue tyrosine 389 is modified to Phosphotyrosine. Residue threonine 419 is modified to Phosphothreonine. Residue tyrosine 424 is modified to Phosphotyrosine. Serine 625 is modified (phosphoserine). Positions 662-684 (LNKLMTNLRSTHPHFVRCIIPNE) are actin-binding. Histidine 760 is modified (pros-methylhistidine). Residues 764-778 (KFGHTKVFFKAGLLG) are actin-binding. The IQ domain occupies 788–817 (LAQLITRTQAMCRGYLARVEYQKMVERRES). Residues 846 to 1942 (LLKSAETEKE…EVHTKIISEE (1097 aa)) adopt a coiled-coil conformation. 5 positions are modified to phosphoserine: serine 1095, serine 1099, serine 1165, serine 1240, and serine 1246. The tract at residues 1156–1175 (RLEEAGGATSAQIEMNKKRE) is disordered. Threonine 1258 is subject to Phosphothreonine. The residue at position 1264 (serine 1264) is a Phosphoserine. A phosphothreonine mark is found at threonine 1268 and threonine 1289. Phosphoserine is present on residues serine 1291, serine 1295, serine 1306, and serine 1309. Tyrosine 1467 carries the post-translational modification Phosphotyrosine. The residue at position 1470 (threonine 1470) is a Phosphothreonine. Serine 1477 is subject to Phosphoserine. Tyrosine 1495 carries the post-translational modification Phosphotyrosine. Serine 1498 bears the Phosphoserine mark. At threonine 1504 the chain carries Phosphothreonine. At serine 1517 the chain carries Phosphoserine. Phosphothreonine is present on threonine 1520. Phosphoserine occurs at positions 1545, 1557, 1577, 1603, 1606, 1717, and 1729. A phosphothreonine mark is found at threonine 1733 and threonine 1739. Residue serine 1742 is modified to Phosphoserine.

This sequence belongs to the TRAFAC class myosin-kinesin ATPase superfamily. Myosin family. Muscle myosin is a hexameric protein that consists of 2 heavy chain subunits (MHC), 2 alkali light chain subunits (MLC) and 2 regulatory light chain subunits (MLC-2). Interacts with SLC26A5. In terms of tissue distribution, expressed in the cochlea (at protein level). Strongly expressed in spiral ganglion neurons with axonal sprouts and supporting cells around hair cells. In the organ of Corti, it is expressed in inner and outer hair cells, and in supporting cells.

It is found in the cytoplasm. The protein localises to the myofibril. In terms of biological role, required for normal hearing. It plays a role in cochlear amplification of auditory stimuli, likely through the positive regulation of prestin (SLC26A5) activity and outer hair cell (OHC) electromotility. This is Myosin-1 from Mus musculus (Mouse).